The chain runs to 728 residues: Beta-porphyranase A (728 aa).

The N-terminal stretch at 1-22 is a signal peptide; sequence MSYKYIFLLSAFTLGVPPGIYC. 6 residues coordinate substrate: His-53, Lys-76, Trp-78, Lys-87, His-114, and Asn-151. The Proton donor role is filled by Glu-152. Substrate is bound by residues His-235, Glu-279, Ser-326, and Trp-331. Glu-279 (nucleophile) is an active-site residue. In terms of domain architecture, CBM-cenC spans 599-701; the sequence is TLQNGTFSEG…AVSFDFNSTV (103 aa).

Belongs to the glycosyl hydrolase 86 family.

It catalyses the reaction Hydrolysis of beta-D-galactopyranose-(1-&gt;4)-alpha-L-galactopyranose-6-sulfate linkages in porphyran.. Cleaves the sulfated polysaccharide porphyran at the (1-&gt;4) linkages between beta-D-galactopyranose and alpha-L-galactopyranose-6-sulfate, forming mostly the disaccharide alpha-L-galactopyranose-6-sulfate-(1-&gt;3)-beta-D-galactose. Some longer oligosaccharides of even number of residues are also observed. Inactive on the non-sulfated agarose portion of the porphyran backbone. Can also use methylated galactoses. The polypeptide is Beta-porphyranase A (Phocaeicola plebeius (strain DSM 17135 / JCM 12973 / CCUG 54634 / M2) (Bacteroides plebeius)).